A 252-amino-acid chain; its full sequence is Short-chain dehydrogenase/reductase eriH (252 aa).

NADP(+) is bound by residues isoleucine 16, aspartate 65, asparagine 92, lysine 125, tyrosine 158, lysine 162, valine 191, and threonine 193. The Proton acceptor role is filled by tyrosine 158. Catalysis depends on tyrosine 158, which acts as the Proton donor. Residue lysine 162 is the Lowers pKa of active site Tyr of the active site.

It belongs to the short-chain dehydrogenases/reductases (SDR) family.

It carries out the reaction cyathadiol + reduced [NADPH--hemoprotein reductase] + O2 = cyathatriol + oxidized [NADPH--hemoprotein reductase] + H2O + H(+). It catalyses the reaction 11-O-acetylcyathatriol + A = 11-O-acetylcyathin A3 + AH2. The catalysed reaction is cyathatriol + A = cyathin A3 + AH2. It participates in secondary metabolite biosynthesis. Its function is as follows. Short-chain dehydrogenase/reductase; part of the gene cluster that mediates the biosynthesis of erinacines, cyathane-xylosides that show unique biological activities, including leishmanicidal activity, stimulating activity for nerve growth-factor synthesis, and agonistic activity toward the kappa opioid receptor. Within the pathway, eriH works with eriA to catalyze C-11 hydroxylation of cyathadiol to produce cyathatriol. EriH also catalyzes oxidation of 11-O-acetyl-cyathatriol into 1-O-acetylcyathin A3. In the absence of eriL and eriJ, the SDR eriH is able to convert cyathatriol to cyathin A3; this is likely a switching mechanism in the biosynthesis of cyathins (C-14 ketogroup)and erinacines (C-14 glycosylated group). The first step of the erinacines biosynthesis pathway is catalyzed by the geranylgeranyl diphosphate (GGPP) synthase eriE via conversion of farnesyl pyrophosphate and isopentyl pyrophosphate into geranylgeranyl pyrophosphate (GGPP). GGPP is then substrate of the diterpene cyclase eriG for the production of cyatha-3,12-diene. The cytochrome P450 monooxygenase eriI then hydroxylates cyatha-3,12-diene at C-14 of the seven-membered ring to produce erinacol, which is further hydroxylated at C-15 by the cytochrome P450 monooxygenase eriC to yield cyathadiol. The cytochrome P450 monooxygenase eriA then catalyzes C-11 hydroxylation in the presence of the short chain dehydrogenase/reductase (SDR) eriH, which leads to the production of cyathatriol. The acetyltransferase eriL converts cyathatriol into 11-O-acetyl-cyathatriol. The SDR eriH catalyzes further oxidation of 11-O-acetyl-cyathatriol into 1-O-acetylcyathin A3. Finally, the glycosyl transferase eriJ tranfers xylose from UDP-xylose onto C-14 of 11-O-acetyl-cyathatriol to form eracine Q. EriJ is also able to convert 11-O-acetyl-cyathatriol to eracine Q2 by using UDP-D-glucose as cosubstrate, but at a lower rate. This is Short-chain dehydrogenase/reductase eriH from Hericium erinaceus (Lion's mane mushroom).